A 160-amino-acid polypeptide reads, in one-letter code: Transcription elongation factor GreA 2 (160 aa).

Residues 9–73 (MTEEGKVKLE…RIKTVEHMLQ (65 aa)) adopt a coiled-coil conformation.

It belongs to the GreA/GreB family.

Its function is as follows. Necessary for efficient RNA polymerase transcription elongation past template-encoded arresting sites. The arresting sites in DNA have the property of trapping a certain fraction of elongating RNA polymerases that pass through, resulting in locked ternary complexes. Cleavage of the nascent transcript by cleavage factors such as GreA or GreB allows the resumption of elongation from the new 3'terminus. GreA releases sequences of 2 to 3 nucleotides. This Lactiplantibacillus plantarum (strain ATCC BAA-793 / NCIMB 8826 / WCFS1) (Lactobacillus plantarum) protein is Transcription elongation factor GreA 2.